The following is a 672-amino-acid chain: Acetoacetyl-CoA synthetase (672 aa).

It belongs to the ATP-dependent AMP-binding enzyme family. In terms of tissue distribution, abundant in male subcutaneous white adipose tissue after weaning. In white adipose tissue, it is preferentially detected in mature adipocytes but not in preadipocytes. The expression in primary preadipocytes increases during the adipocyte differentiation. In brain, it is expressed in the midbrain, pons/medulla, cerebral cortex, hippocampus and cerebellum. The expression in the cerebellum is restricted primarily to glial cells, while in the cerebral cortex, it is restricted to neuronal cells.

The protein localises to the cytoplasm. It localises to the cytosol. It carries out the reaction acetoacetate + ATP + CoA = acetoacetyl-CoA + AMP + diphosphate. Converts acetoacetate to acetoacetyl-CoA in the cytosol. Ketone body-utilizing enzyme, responsible for the synthesis of cholesterol and fatty acids. The sequence is that of Acetoacetyl-CoA synthetase (Aacs) from Rattus norvegicus (Rat).